The sequence spans 400 residues: Ribosomal RNA dihydrouridine synthase (400 aa).

Residues alanine 14, aspartate 33, asparagine 34, arginine 40, glycine 46, asparagine 51, valine 131, glutamate 367, and phenylalanine 380 each coordinate FAD.

This sequence belongs to the BaiN/RdsA family. RdsA subfamily. FAD serves as cofactor.

It carries out the reaction a 5,6-dihydrouridine in mRNA + NAD(+) = a uridine in mRNA + NADH + H(+). In terms of biological role, catalyzes the synthesis of 5,6-dihydrouridine (D) at position 2449 in 23S rRNA. Can use NADH as a source of reducing equivalents but not NADPH. This chain is Ribosomal RNA dihydrouridine synthase, found in Escherichia coli (strain K12).